A 257-amino-acid polypeptide reads, in one-letter code: UPF0246 protein Rsph17025_0016 (257 aa).

The protein belongs to the UPF0246 family.

This Cereibacter sphaeroides (strain ATCC 17025 / ATH 2.4.3) (Rhodobacter sphaeroides) protein is UPF0246 protein Rsph17025_0016.